Here is a 66-residue protein sequence, read N- to C-terminus: Defensin-B1 (66 aa).

Residues 1–23 (MNAHVLLLCTILFLLVHTPPVLG) form the signal peptide. Intrachain disulfides connect Cys-29/Cys-56, Cys-36/Cys-50, and Cys-40/Cys-57. A propeptide spanning residues 61 to 66 (VLMEDG) is cleaved from the precursor.

The protein belongs to the beta-defensin family. Expressed at low levels in kidney, lung, and spleen.

The protein resides in the secreted. Its function is as follows. Has bactericidal activity. May act as a ligand for C-C chemokine receptor CCR6. Positively regulates the sperm motility and bactericidal activity in a CCR6-dependent manner. Binds to CCR6 and triggers Ca2+ mobilization in the sperm which is important for its motility. This is Defensin-B1 from Ornithorhynchus anatinus (Duckbill platypus).